The sequence spans 168 residues: Mitochondrial ATP-independent inner membrane protease subunit 1a (168 aa).

The transit peptide at 1 to 47 directs the protein to the mitochondrion; it reads MRMTFLSYLKQWRGTAKEAFENVSIVAKFLCLLHVTDRYIISTTHVH. Residues Ser50 and Lys94 contribute to the active site.

This sequence belongs to the peptidase S26 family. IMP1 subfamily. In terms of assembly, heterodimer of 2 subunits, IMP1A/B and IMP12.

The protein resides in the mitochondrion inner membrane. In terms of biological role, catalyzes the removal of transit peptides required for the targeting of proteins from the mitochondrial matrix, across the inner membrane, into the inter-membrane space. This Arabidopsis thaliana (Mouse-ear cress) protein is Mitochondrial ATP-independent inner membrane protease subunit 1a.